The chain runs to 422 residues: Tyrosine--tRNA ligase (422 aa).

Residue tyrosine 37 coordinates L-tyrosine. Residues proline 42–histidine 51 carry the 'HIGH' region motif. L-tyrosine is bound by residues tyrosine 175 and glutamine 179. Residues lysine 235–threonine 239 carry the 'KMSKS' region motif. Residue lysine 238 participates in ATP binding. One can recognise an S4 RNA-binding domain in the interval lysine 357–lysine 414.

Belongs to the class-I aminoacyl-tRNA synthetase family. TyrS type 1 subfamily. As to quaternary structure, homodimer.

Its subcellular location is the cytoplasm. It catalyses the reaction tRNA(Tyr) + L-tyrosine + ATP = L-tyrosyl-tRNA(Tyr) + AMP + diphosphate + H(+). In terms of biological role, catalyzes the attachment of tyrosine to tRNA(Tyr) in a two-step reaction: tyrosine is first activated by ATP to form Tyr-AMP and then transferred to the acceptor end of tRNA(Tyr). This Buchnera aphidicola subsp. Acyrthosiphon pisum (strain 5A) protein is Tyrosine--tRNA ligase.